An 843-amino-acid chain; its full sequence is Adenylate cyclase (843 aa).

A catalytic region spans residues 1-542 (MECNLAQAKQ…NLRQSFPSTI (542 aa)). Residues 549-843 (SDLLNQCEIR…VPFKFRQMNK (295 aa)) are regulatory.

Belongs to the adenylyl cyclase class-1 family.

Its subcellular location is the cytoplasm. It catalyses the reaction ATP = 3',5'-cyclic AMP + diphosphate. Functionally, plays an essential role in competence development. In Haemophilus influenzae (strain ATCC 51907 / DSM 11121 / KW20 / Rd), this protein is Adenylate cyclase (cyaA).